We begin with the raw amino-acid sequence, 655 residues long: p-hydroxybenzoic acid efflux pump subunit AaeB (655 aa).

Helical transmembrane passes span 13–33 (FAVKLATAIVLALFVGFHFQL), 38–58 (WAVLTAAIVAAGPAFAAGGEP), 69–89 (LRIIGTFIGCIAGLVIIIAMI), 93–113 (LLMILVCCIWAGFCTWISSLV), 121–141 (WGLAGYTALIIVITIQPEPLL), 152–172 (EIVIGIVCAIMADLLFSPRSI), 370–390 (LFWLWTGWTSGSGAMVMIAVV), 407–427 (FIYGTLAALPLGLLYFLVIIP), 431–451 (QSMLLLCISLAVLGFFLGIEV), 459–479 (MGALASTINIIVLDNPMTFHF), and 482–502 (FLDSALGQIVGCVLAFTVILL).

The protein belongs to the aromatic acid exporter ArAE (TC 2.A.85) family.

It is found in the cell inner membrane. Its function is as follows. Forms an efflux pump with AaeA. Could function as a metabolic relief valve, allowing to eliminate certain compounds when they accumulate to high levels in the cell. The sequence is that of p-hydroxybenzoic acid efflux pump subunit AaeB from Shigella sonnei (strain Ss046).